We begin with the raw amino-acid sequence, 643 residues long: Threonine--tRNA ligase (643 aa).

Residues 1-61 enclose the TGS domain; that stretch reads MIKVTLKDGS…KEDVSLSICT (61 aa). Positions 240-540 are catalytic; sequence DHNKLGRELK…LIEKYAGAFP (301 aa). Zn(2+)-binding residues include Cys-335, His-386, and His-517.

Belongs to the class-II aminoacyl-tRNA synthetase family. As to quaternary structure, homodimer. The cofactor is Zn(2+).

Its subcellular location is the cytoplasm. It carries out the reaction tRNA(Thr) + L-threonine + ATP = L-threonyl-tRNA(Thr) + AMP + diphosphate + H(+). Its function is as follows. Catalyzes the attachment of threonine to tRNA(Thr) in a two-step reaction: L-threonine is first activated by ATP to form Thr-AMP and then transferred to the acceptor end of tRNA(Thr). Also edits incorrectly charged L-seryl-tRNA(Thr). This chain is Threonine--tRNA ligase, found in Clostridium botulinum (strain Eklund 17B / Type B).